Here is a 299-residue protein sequence, read N- to C-terminus: MWFKQISFYPLNKEKLPEADVLADKLAEAEFTHCQGLDWFSEGFTAPVSFSPELVFPADFTLRVALKKEEKVLPAGVIRDILEEKVAEIQNNEARNVGRKEKQELKEQITDDLLPRAFTRSSRTEAVFNTRHGYLLVNNAASAKAENILTKLREALGGLEASLPNTKQSPSSLMTGWLLQGHCEGGFELDSDCELKGTGDIVPVVKVSKQDLTADEVVQHVKNGKTVTQLGLVWREQIAFILTQDFTLKRIQYLDVLQEEAESNGDDAAGLAFASQILMAESVSIMLEELVSYLGGWQD.

Belongs to the RdgC family.

It localises to the cytoplasm. The protein resides in the nucleoid. Its function is as follows. May be involved in recombination. The sequence is that of Recombination-associated protein RdgC from Neisseria meningitidis serogroup A / serotype 4A (strain DSM 15465 / Z2491).